The following is a 716-amino-acid chain: Amino-acid acetyltransferase, mitochondrial (716 aa).

The transit peptide at 1 to 44 (MSLHTGWPRTVNSSFLKKHRSSLCTCQHTSSVLPRSFSTTPDRH) directs the protein to the mitochondrion. Positions 37 to 56 (FSTTPDRHVQQSADFSSTSR) are enriched in polar residues. 2 disordered regions span residues 37 to 58 (FSTT…SRSY) and 96 to 121 (KAQH…TLPS). A compositionally biased stretch (basic and acidic residues) spans 101–112 (KSPDANKPEPEK). In terms of domain architecture, N-acetyltransferase spans 537–706 (SRPRLKLDDP…YEAVCRSIQP (170 aa)).

It belongs to the acetyltransferase family.

The protein localises to the mitochondrion. It carries out the reaction L-glutamate + acetyl-CoA = N-acetyl-L-glutamate + CoA + H(+). Its pathway is amino-acid biosynthesis; L-arginine biosynthesis; N(2)-acetyl-L-ornithine from L-glutamate: step 1/4. Its function is as follows. N-acetylglutamate synthase involved in arginine biosynthesis. This is Amino-acid acetyltransferase, mitochondrial (arg2) from Aspergillus fumigatus (strain CBS 144.89 / FGSC A1163 / CEA10) (Neosartorya fumigata).